A 496-amino-acid chain; its full sequence is Solute carrier family 2, facilitated glucose transporter member 3 (496 aa).

Over 1-10 (MGTQKVTPAL) the chain is Cytoplasmic. Residues 11–32 (IFAITVATIGSFQFGYNTGVIN) traverse the membrane as a helical segment. The Extracellular segment spans residues 33–64 (APEKIIKEFINKTLTDKGNAPPSEVLLTSLWS). N-linked (GlcNAc...) asparagine glycosylation occurs at Asn43. Residues 65 to 85 (LSVAIFSVGGMIGSFSVGLFV) form a helical membrane-spanning segment. Residues 86–90 (NRFGR) lie on the Cytoplasmic side of the membrane. A helical transmembrane segment spans residues 91 to 111 (RNSMLIVNLLAVTGGCFMGLC). The Extracellular portion of the chain corresponds to 112–118 (KVAKSVE). A helical transmembrane segment spans residues 119-142 (MLILGRLVIGLFCGLCTGFVPMYI). Residues 143 to 153 (GEISPTALRGA) lie on the Cytoplasmic side of the membrane. A helical transmembrane segment spans residues 154-174 (FGTLNQLGIVVGILVAQIFGL). Gln159 lines the D-glucose pocket. The Extracellular portion of the chain corresponds to 175–183 (EFILGSEEL). A helical transmembrane segment spans residues 184–204 (WPLLLGFTILPAILQSAALPF). Over 205 to 269 (CPESPRFLLI…LFRVSSYRQP (65 aa)) the chain is Cytoplasmic. Position 232 is a phosphothreonine (Thr232). Residues 270 to 290 (IIISIVLQLSQQLSGINAVFY) traverse the membrane as a helical segment. Residues 277-279 (QLS) form an important for selectivity against fructose region. D-glucose contacts are provided by residues 280–281 (QQ) and Asn286. Residues 291 to 304 (YSTGIFKDAGVQEP) are Extracellular-facing. Residues 305–325 (IYATIGAGVVNTIFTVVSLFL) traverse the membrane as a helical segment. Asn315 contributes to the D-glucose binding site. Topologically, residues 326 to 331 (VERAGR) are cytoplasmic. The chain crosses the membrane as a helical span at residues 332–352 (RTLHMIGLGGMAFCSTLMTVS). The Extracellular segment spans residues 353-363 (LLLKDNYNGMS). The helical transmembrane segment at 364–389 (FVCIGAILVFVAFFEIGPGPIPWFIV) threads the bilayer. D-glucose contacts are provided by Glu378 and Trp386. Residues 390-399 (AELFSQGPRP) are Cytoplasmic-facing. Residues 400–420 (AAMAVAGCSNWTSNFLVGLLF) form a helical membrane-spanning segment. The Extracellular portion of the chain corresponds to 421-429 (PSAAHYLGA). A helical membrane pass occupies residues 430–450 (YVFIIFTGFLITFLAFTFFKV). Over 451-496 (PETRGRTFEDITRAFEGQAHGADRSGKDGVMEMNSIEPAKETTTNV) the chain is Cytoplasmic. 2 positions are modified to phosphoserine: Ser475 and Ser485. A Phosphothreonine modification is found at Thr492.

Belongs to the major facilitator superfamily. Sugar transporter (TC 2.A.1.1) family. Glucose transporter subfamily. Interacts with SMIM43; the interaction may promote SLC2A3-mediated glucose transport to meet the energy needs of mesendoderm differentiation. As to expression, highly expressed in brain. Expressed in many tissues.

The protein resides in the cell membrane. Its subcellular location is the perikaryon. It is found in the cell projection. It catalyses the reaction D-glucose(out) = D-glucose(in). The catalysed reaction is D-galactose(in) = D-galactose(out). With respect to regulation, deoxyglucose transport is inhibited by D-glucose, D-galactose and maltose. Galactose transport is inhibited by D-glucose and maltose. Facilitative glucose transporter. Can also mediate the uptake of various other monosaccharides across the cell membrane. Mediates the uptake of glucose, 2-deoxyglucose, galactose, mannose, xylose and fucose, and probably also dehydroascorbate. Does not mediate fructose transport. Required for mesendoderm differentiation. This chain is Solute carrier family 2, facilitated glucose transporter member 3, found in Homo sapiens (Human).